A 251-amino-acid polypeptide reads, in one-letter code: HTH-type transcriptional regulator IolR (251 aa).

The HTH deoR-type domain maps to Met1–Ser57. The H-T-H motif DNA-binding region spans Val19–Asp38.

Functionally, iol operon repressor. In Bacillus subtilis (strain 168), this protein is HTH-type transcriptional regulator IolR (iolR).